The chain runs to 873 residues: Bifunctional uridylyltransferase/uridylyl-removing enzyme (873 aa).

Residues 1–332 (MAFQSPLTFN…NGGETEPAVI (332 aa)) are uridylyltransferase. Positions 333–692 (INEDFQRRGR…MSKKATRGGT (360 aa)) are uridylyl-removing. The HD domain occupies 451–573 (VDEHSVRLLN…VRDEERLEYL (123 aa)). ACT domains follow at residues 693–773 (EVFV…VKTR) and 800–873 (LMEL…ELAP).

It belongs to the GlnD family. Mg(2+) serves as cofactor.

It carries out the reaction [protein-PII]-L-tyrosine + UTP = [protein-PII]-uridylyl-L-tyrosine + diphosphate. The catalysed reaction is [protein-PII]-uridylyl-L-tyrosine + H2O = [protein-PII]-L-tyrosine + UMP + H(+). Uridylyltransferase (UTase) activity is inhibited by glutamine, while glutamine activates uridylyl-removing (UR) activity. Modifies, by uridylylation and deuridylylation, the PII regulatory proteins (GlnB and homologs), in response to the nitrogen status of the cell that GlnD senses through the glutamine level. Under low glutamine levels, catalyzes the conversion of the PII proteins and UTP to PII-UMP and PPi, while under higher glutamine levels, GlnD hydrolyzes PII-UMP to PII and UMP (deuridylylation). Thus, controls uridylylation state and activity of the PII proteins, and plays an important role in the regulation of nitrogen assimilation and metabolism. In Vibrio vulnificus (strain CMCP6), this protein is Bifunctional uridylyltransferase/uridylyl-removing enzyme.